A 631-amino-acid chain; its full sequence is tRNA 5-methylaminomethyl-2-thiouridine biosynthesis bifunctional protein MnmC (631 aa).

The tract at residues 1 to 243 is tRNA (mnm(5)s(2)U34)-methyltransferase; that stretch reads MITDLRPPAM…KREMLTGRLP (243 aa). The interval 261-631 is FAD-dependent cmnm(5)s(2)U34 oxidoreductase; it reads IGAGIAGAAL…GRLYRNQLTV (371 aa).

This sequence in the N-terminal section; belongs to the methyltransferase superfamily. tRNA (mnm(5)s(2)U34)-methyltransferase family. It in the C-terminal section; belongs to the DAO family. The cofactor is FAD.

The protein resides in the cytoplasm. It catalyses the reaction 5-aminomethyl-2-thiouridine(34) in tRNA + S-adenosyl-L-methionine = 5-methylaminomethyl-2-thiouridine(34) in tRNA + S-adenosyl-L-homocysteine + H(+). Its function is as follows. Catalyzes the last two steps in the biosynthesis of 5-methylaminomethyl-2-thiouridine (mnm(5)s(2)U) at the wobble position (U34) in tRNA. Catalyzes the FAD-dependent demodification of cmnm(5)s(2)U34 to nm(5)s(2)U34, followed by the transfer of a methyl group from S-adenosyl-L-methionine to nm(5)s(2)U34, to form mnm(5)s(2)U34. This is tRNA 5-methylaminomethyl-2-thiouridine biosynthesis bifunctional protein MnmC from Marinobacter nauticus (strain ATCC 700491 / DSM 11845 / VT8) (Marinobacter aquaeolei).